Reading from the N-terminus, the 232-residue chain is Nuclear transcription factor Y subunit nfyc-1 (232 aa).

The tract at residues 191–232 (TVPTTSTNGPGHMSEDSFQDPNMHSDFHQRTSNSSVNRSHHN) is disordered. A compositionally biased stretch (polar residues) spans 220-232 (RTSNSSVNRSHHN).

The protein belongs to the NFYC/HAP5 subunit family. In terms of assembly, forms two NF-Y heterotrimeric transcription factor complexes: the nfya-1-NF-Y complex is composed of nfya-1, nfyb-1 and nfyc-1, and the nfya-2-NF-Y complex is composed of nfya-2, nfyb-1 and nfyc-1. Interacts with nfyb-1; the interaction is direct and is required for the interaction with either nfya-1 or nfya-2, and subsequent binding of the complex to the 5'-CCAAT-3' box motif in DNA. As to expression, expressed in certain parts of the gonads with high expression in fertilized oocytes in the uterus and mature oocytes from the distal to the proximal arm of the gonad, but weak expression in the syncytial ovaries and immature oocytes at the beginning of the proximal arm of the gonad. Expressed in the excretory cell, secretory cells in the pharyngeal terminal bulb wall, in the small ganglia surrounding the pharynx and in the neurons running anteriorly to the sensory organs in the head. Not expressed in the intestine, the hypodermis or body wall muscle surrounding the pseudocoelomic space.

It is found in the nucleus. Its subcellular location is the cytoplasm. It localises to the perikaryon. Component of sequence-specific heterotrimeric transcription factor (nfya-1-NF-Y and nfya-2-NF-Y) complexes which specifically recognize a 5'-CCAAT-3' box motif found in the promoters of its target genes to regulate their expression and control cellular identity in particular tissue types. In association with the components in the NF-Y complexes, represses the expression of the T-box transcription factor tbx-2 throughout larval development, which most likely restricts its expression to certain tissues. May act to repress txb-2 expression in conjunction with tbx-2 itself, which has an autoregulatory role. In association with the components in the nfya-1-NF-Y complex, negatively regulates the expression of the homeobox protein egl-5 to spatially restrict its expression in tissues such as the head. May regulate egl-5 expression in association with the mes-2-mes-3-mes-6 complex. This chain is Nuclear transcription factor Y subunit nfyc-1, found in Caenorhabditis elegans.